The primary structure comprises 251 residues: Intermembrane phospholipid transport system lipoprotein MlaA (251 aa).

An N-terminal signal peptide occupies residues 1 to 17 (MKLRLSALALGTTLLVG). A lipid anchor (N-palmitoyl cysteine) is attached at Cys-18. Cys-18 is lipidated: S-diacylglycerol cysteine. The tract at residues 228 to 251 (GELKPQENPNAQAIQDDLKDIDSE) is disordered.

The protein belongs to the MlaA family.

The protein resides in the cell outer membrane. Involved in a phospholipid transport pathway that maintains lipid asymmetry in the outer membrane by retrograde trafficking of phospholipids from the outer membrane to the inner membrane. Required for intercellular spreading of S.flexneri. This chain is Intermembrane phospholipid transport system lipoprotein MlaA, found in Shigella flexneri.